A 500-amino-acid chain; its full sequence is Lysine--tRNA ligase (500 aa).

2 residues coordinate Mg(2+): Glu-410 and Glu-417.

The protein belongs to the class-II aminoacyl-tRNA synthetase family. In terms of assembly, homodimer. It depends on Mg(2+) as a cofactor.

It is found in the cytoplasm. The enzyme catalyses tRNA(Lys) + L-lysine + ATP = L-lysyl-tRNA(Lys) + AMP + diphosphate. This chain is Lysine--tRNA ligase, found in Shewanella oneidensis (strain ATCC 700550 / JCM 31522 / CIP 106686 / LMG 19005 / NCIMB 14063 / MR-1).